Consider the following 365-residue polypeptide: Flagellar P-ring protein (365 aa).

The first 19 residues, 1-19 (MIKFLSALILLLVITAAQA), serve as a signal peptide directing secretion.

It belongs to the FlgI family. The basal body constitutes a major portion of the flagellar organelle and consists of four rings (L,P,S, and M) mounted on a central rod.

It localises to the periplasm. The protein resides in the bacterial flagellum basal body. Functionally, assembles around the rod to form the L-ring and probably protects the motor/basal body from shearing forces during rotation. This Escherichia coli O81 (strain ED1a) protein is Flagellar P-ring protein.